The primary structure comprises 1004 residues: Importin subunit beta-5 (1004 aa).

Residue Met-1 is modified to N-acetylmethionine. The Importin N-terminal domain maps to 21–100 (AETQLLQWCD…REVLLKLCLN (80 aa)).

It belongs to the importin beta family. In terms of assembly, interacts with NAP1.

It localises to the cytoplasm. Its subcellular location is the nucleus. The protein resides in the nuclear pore complex. In terms of biological role, required for nuclear protein import and mediates docking of import substrate to distinct nucleoporins. Serves a receptor for nuclear localization signals. Mediates the nuclear import of TATA-binding protein (TBP) and of histones H2A and H2B. The protein is Importin subunit beta-5 (KAP114) of Saccharomyces cerevisiae (strain ATCC 204508 / S288c) (Baker's yeast).